The following is a 506-amino-acid chain: Methylthioalkylmalate synthase 1, chloroplastic (506 aa).

The N-terminal 49 residues, 1-49 (MASSLLTSSVMIPTTGSTVVGRSVLPFQSSLHSLRLTHSYKNPALFISC), are a transit peptide targeting the chloroplast. The region spanning 85-359 (VRVFDTTLRD…YTKIDTRQIM (275 aa)) is the Pyruvate carboxyltransferase domain. At Ser-98 the chain carries Phosphoserine.

This sequence belongs to the alpha-IPM synthase/homocitrate synthase family. Monomer. Mn(2+) serves as cofactor. In terms of tissue distribution, highly expressed in leaves, flowers, roots and siliques. Not detected in flowers in PubMed:12432038.

The protein localises to the plastid. It localises to the chloroplast. The enzyme catalyses an omega-(methylsulfanyl)-2-oxoalkanoate + acetyl-CoA + H2O = a 2-(omega-methylsulfanyl)alkylmalate + CoA + H(+). 1 mM DTT required for activity. Activated by ATP and inhibited by iodoacetamide. In terms of biological role, determines the side chain length of aliphatic glucosinolate structures. Catalyzes exclusively the condensation reactions of both the first and second methionine carbon chain elongation. The polypeptide is Methylthioalkylmalate synthase 1, chloroplastic (MAM1) (Arabidopsis thaliana (Mouse-ear cress)).